A 348-amino-acid polypeptide reads, in one-letter code: Inactive rhomboid-related protein 2 (348 aa).

The EF-hand domain maps to 14–49; it reads IEASSWIRIFRAFDTDHDGLIQCEEMQKTIRDSTYS. Residues D27, D29, D31, and E38 each contribute to the Ca(2+) site. The next 7 membrane-spanning stretches (helical) occupy residues 121–141, 177–197, 207–227, 229–249, 263–283, 290–310, and 323–343; these read PPIF…YYVV, LINV…AIGV, IYIL…ALDP, VFLC…ITTI, LPIL…QRFF, VSMY…FILF, and FWVS…LIAA.

The protein belongs to the peptidase S54 family.

Its subcellular location is the membrane. In terms of biological role, probable inactive serine protease. The sequence is that of Inactive rhomboid-related protein 2 from Caenorhabditis elegans.